A 106-amino-acid polypeptide reads, in one-letter code: Large ribosomal subunit protein uL24 (106 aa).

It belongs to the universal ribosomal protein uL24 family. As to quaternary structure, part of the 50S ribosomal subunit.

One of two assembly initiator proteins, it binds directly to the 5'-end of the 23S rRNA, where it nucleates assembly of the 50S subunit. Its function is as follows. One of the proteins that surrounds the polypeptide exit tunnel on the outside of the subunit. This chain is Large ribosomal subunit protein uL24, found in Desulforamulus reducens (strain ATCC BAA-1160 / DSM 100696 / MI-1) (Desulfotomaculum reducens).